We begin with the raw amino-acid sequence, 246 residues long: tRNA (guanine-N(7)-)-methyltransferase (246 aa).

Residues glutamate 77, glutamate 102, aspartate 129, and aspartate 152 each contribute to the S-adenosyl-L-methionine site. Aspartate 152 is a catalytic residue. Substrate contacts are provided by residues lysine 156, aspartate 188, and 225–228; that span reads TKFE.

The protein belongs to the class I-like SAM-binding methyltransferase superfamily. TrmB family.

The enzyme catalyses guanosine(46) in tRNA + S-adenosyl-L-methionine = N(7)-methylguanosine(46) in tRNA + S-adenosyl-L-homocysteine. The protein operates within tRNA modification; N(7)-methylguanine-tRNA biosynthesis. In terms of biological role, catalyzes the formation of N(7)-methylguanine at position 46 (m7G46) in tRNA. The sequence is that of tRNA (guanine-N(7)-)-methyltransferase from Haemophilus influenzae (strain 86-028NP).